Reading from the N-terminus, the 644-residue chain is MFDIRKYPQALAVSQSAALTPEDYRRLYRQSVEDPDTFWAEQAKRLDWIKPWSSVQQCDLHTGKARWFDGAQLNVSYNCIDRHLAQRGEQTALLWEGDDPKDSKAITYRELHRQVCRLANAMKARGVKKGDRVSIYMPMIPEAAFAMLACTRIGAIHSVVFGGFSPDALRDRILDADCRTVITADEGVRGGKRIPLKQNVDKALASCPAVSSVLVVRRTGGDVAWTEGRDLWYHEATKDAGDDCPPEPMEAEDPLFILYTSGSTGKPKGVLHTTGGYLLQATMTFKVVFDYRDGEVFWCTADVGWVTGHSYIVYGPLANGAISLMFEGVPNYPDTSRFWQVVDKHQVNIFYTAPTALRALMREGSAPLQSTSRKSLRLLGSVGEPINPEAWEWYFEEVGQKRCPIVDTWWQTETGGIMLTPLPGTQSLKPGCATQPMFGVQPVLLDEKGKLIEGPGAGVLAIKASWPGQIRSVYGDHQRMVDTYFKPLPGYYFTGDGARRDADGDYWITGRIDDVINVSGHRIGTAEVESALVLHDSVAEAAVVGYPHDLKGQGVYAFVTTMNGVTPDDTLKAELLALVSKEIGSFAKPELIQWAPALPKTRSGKIMRRILRKIACNELENLGDTSTLADPSVVQGLIDKRLNQ.

Residues 189–192, T307, and N331 contribute to the CoA site; that span reads RGGK. Residues 383–385, 407–412, D496, and R511 each bind ATP; these read GEP and DTWWQT. Position 519 (S519) interacts with CoA. Residue R522 coordinates ATP. Residues V533, H535, and V538 each contribute to the Mg(2+) site. Residue K605 is modified to N6-acetyllysine.

The protein belongs to the ATP-dependent AMP-binding enzyme family. Mg(2+) serves as cofactor. Post-translationally, acetylated. Deacetylation by the SIR2-homolog deacetylase activates the enzyme.

The enzyme catalyses acetate + ATP + CoA = acetyl-CoA + AMP + diphosphate. Catalyzes the conversion of acetate into acetyl-CoA (AcCoA), an essential intermediate at the junction of anabolic and catabolic pathways. AcsA undergoes a two-step reaction. In the first half reaction, AcsA combines acetate with ATP to form acetyl-adenylate (AcAMP) intermediate. In the second half reaction, it can then transfer the acetyl group from AcAMP to the sulfhydryl group of CoA, forming the product AcCoA. In Pseudomonas putida (strain ATCC 47054 / DSM 6125 / CFBP 8728 / NCIMB 11950 / KT2440), this protein is Acetyl-coenzyme A synthetase 2.